The sequence spans 296 residues: 6-hydroxypseudooxynicotine dehydrogenase complex subunit alpha (296 aa).

Positions 1–177 (MKPPSFDYVV…VEVNVPQLPH (177 aa)) constitute an FAD-binding PCMH-type domain. Residues 30-37 (IIAGGQSL), 111-115 (TIGGS), and glutamate 124 each bind FAD.

In terms of assembly, heterohexamer of 2 alpha (kdhA), 2 beta (kdhB) and 2 gamma (kdhC) subunit. Dimer of heterotrimers. Requires FAD as cofactor.

The catalysed reaction is 6-hydroxypseudooxynicotine + A + H2O = 2,6-dihydroxypseudooxynicotine + AH2. It functions in the pathway alkaloid degradation; nicotine degradation. Its function is as follows. Molybdo-flavoprotein enzyme complex involved in nicotine degradation. The subunit gamma (large subunit) contains the substrate-binding sites, the subunit alpha (medium subunit) binds FAD and the subunit beta (small subunit) has a 2Fe-2S ferredoxin-type domain which binds 2 2Fe-2S clusters. This is 6-hydroxypseudooxynicotine dehydrogenase complex subunit alpha (kdhA) from Paenarthrobacter nicotinovorans (Arthrobacter nicotinovorans).